We begin with the raw amino-acid sequence, 425 residues long: Serine--tRNA ligase (425 aa).

230 to 232 (TAE) contributes to the L-serine binding site. Residue 261–263 (RSE) participates in ATP binding. L-serine is bound at residue E284. 348-351 (EISS) is a binding site for ATP. S384 provides a ligand contact to L-serine.

It belongs to the class-II aminoacyl-tRNA synthetase family. Type-1 seryl-tRNA synthetase subfamily. Homodimer. The tRNA molecule binds across the dimer.

It localises to the cytoplasm. It catalyses the reaction tRNA(Ser) + L-serine + ATP = L-seryl-tRNA(Ser) + AMP + diphosphate + H(+). It carries out the reaction tRNA(Sec) + L-serine + ATP = L-seryl-tRNA(Sec) + AMP + diphosphate + H(+). Its pathway is aminoacyl-tRNA biosynthesis; selenocysteinyl-tRNA(Sec) biosynthesis; L-seryl-tRNA(Sec) from L-serine and tRNA(Sec): step 1/1. Its function is as follows. Catalyzes the attachment of serine to tRNA(Ser). Is also able to aminoacylate tRNA(Sec) with serine, to form the misacylated tRNA L-seryl-tRNA(Sec), which will be further converted into selenocysteinyl-tRNA(Sec). This is Serine--tRNA ligase from Streptococcus equi subsp. equi (strain 4047).